The primary structure comprises 95 residues: Aspartyl/glutamyl-tRNA(Asn/Gln) amidotransferase subunit C (95 aa).

This sequence belongs to the GatC family. As to quaternary structure, heterotrimer of A, B and C subunits.

It catalyses the reaction L-glutamyl-tRNA(Gln) + L-glutamine + ATP + H2O = L-glutaminyl-tRNA(Gln) + L-glutamate + ADP + phosphate + H(+). The enzyme catalyses L-aspartyl-tRNA(Asn) + L-glutamine + ATP + H2O = L-asparaginyl-tRNA(Asn) + L-glutamate + ADP + phosphate + 2 H(+). In terms of biological role, allows the formation of correctly charged Asn-tRNA(Asn) or Gln-tRNA(Gln) through the transamidation of misacylated Asp-tRNA(Asn) or Glu-tRNA(Gln) in organisms which lack either or both of asparaginyl-tRNA or glutaminyl-tRNA synthetases. The reaction takes place in the presence of glutamine and ATP through an activated phospho-Asp-tRNA(Asn) or phospho-Glu-tRNA(Gln). The polypeptide is Aspartyl/glutamyl-tRNA(Asn/Gln) amidotransferase subunit C (Pseudomonas syringae pv. syringae (strain B728a)).